The following is a 619-amino-acid chain: Dihydroxy-acid dehydratase (619 aa).

Aspartate 81 contacts Mg(2+). Residue cysteine 122 participates in [2Fe-2S] cluster binding. Mg(2+)-binding residues include aspartate 123 and lysine 124. The residue at position 124 (lysine 124) is an N6-carboxylysine. [2Fe-2S] cluster is bound at residue cysteine 195. Glutamate 494 lines the Mg(2+) pocket. Serine 520 functions as the Proton acceptor in the catalytic mechanism.

The protein belongs to the IlvD/Edd family. Homodimer. [2Fe-2S] cluster is required as a cofactor. Mg(2+) serves as cofactor.

The catalysed reaction is (2R)-2,3-dihydroxy-3-methylbutanoate = 3-methyl-2-oxobutanoate + H2O. It catalyses the reaction (2R,3R)-2,3-dihydroxy-3-methylpentanoate = (S)-3-methyl-2-oxopentanoate + H2O. Its pathway is amino-acid biosynthesis; L-isoleucine biosynthesis; L-isoleucine from 2-oxobutanoate: step 3/4. It functions in the pathway amino-acid biosynthesis; L-valine biosynthesis; L-valine from pyruvate: step 3/4. Functions in the biosynthesis of branched-chain amino acids. Catalyzes the dehydration of (2R,3R)-2,3-dihydroxy-3-methylpentanoate (2,3-dihydroxy-3-methylvalerate) into 2-oxo-3-methylpentanoate (2-oxo-3-methylvalerate) and of (2R)-2,3-dihydroxy-3-methylbutanoate (2,3-dihydroxyisovalerate) into 2-oxo-3-methylbutanoate (2-oxoisovalerate), the penultimate precursor to L-isoleucine and L-valine, respectively. This Shewanella sp. (strain MR-7) protein is Dihydroxy-acid dehydratase.